Consider the following 515-residue polypeptide: 2-isopropylmalate synthase (515 aa).

The Pyruvate carboxyltransferase domain occupies 4–264 (VKIFDTTLRD…NIGINQDTTQ (261 aa)). Mn(2+) is bound by residues D13, H201, H203, and N237. Residues 390 to 515 (ELDYLSVNTG…RQTTSAQEGI (126 aa)) are regulatory domain.

It belongs to the alpha-IPM synthase/homocitrate synthase family. LeuA type 1 subfamily. In terms of assembly, homodimer. It depends on Mn(2+) as a cofactor.

Its subcellular location is the cytoplasm. The catalysed reaction is 3-methyl-2-oxobutanoate + acetyl-CoA + H2O = (2S)-2-isopropylmalate + CoA + H(+). Its pathway is amino-acid biosynthesis; L-leucine biosynthesis; L-leucine from 3-methyl-2-oxobutanoate: step 1/4. Functionally, catalyzes the condensation of the acetyl group of acetyl-CoA with 3-methyl-2-oxobutanoate (2-ketoisovalerate) to form 3-carboxy-3-hydroxy-4-methylpentanoate (2-isopropylmalate). This Halothermothrix orenii (strain H 168 / OCM 544 / DSM 9562) protein is 2-isopropylmalate synthase.